Consider the following 397-residue polypeptide: 1-deoxy-D-xylulose 5-phosphate reductoisomerase (397 aa).

Residues Thr10, Gly11, Ser12, Ile13, Gln38, and Asn123 each contribute to the NADPH site. Lys124 contacts 1-deoxy-D-xylulose 5-phosphate. An NADPH-binding site is contributed by Glu125. Asp149 contributes to the Mn(2+) binding site. 1-deoxy-D-xylulose 5-phosphate contacts are provided by Ser150, Glu151, Ser185, and His208. Glu151 contacts Mn(2+). NADPH is bound at residue Gly214. Ser221, Asn226, Lys227, and Glu230 together coordinate 1-deoxy-D-xylulose 5-phosphate. Glu230 contributes to the Mn(2+) binding site.

Belongs to the DXR family. Mg(2+) serves as cofactor. Requires Mn(2+) as cofactor.

It carries out the reaction 2-C-methyl-D-erythritol 4-phosphate + NADP(+) = 1-deoxy-D-xylulose 5-phosphate + NADPH + H(+). It functions in the pathway isoprenoid biosynthesis; isopentenyl diphosphate biosynthesis via DXP pathway; isopentenyl diphosphate from 1-deoxy-D-xylulose 5-phosphate: step 1/6. In terms of biological role, catalyzes the NADPH-dependent rearrangement and reduction of 1-deoxy-D-xylulose-5-phosphate (DXP) to 2-C-methyl-D-erythritol 4-phosphate (MEP). In Idiomarina loihiensis (strain ATCC BAA-735 / DSM 15497 / L2-TR), this protein is 1-deoxy-D-xylulose 5-phosphate reductoisomerase.